The chain runs to 1145 residues: MADTKLTDQQVADLNTILRSDSPLDAKVQYVTIIKSGIKQHNVPESSVAQLFEGLRAATTSQHAALVNAGFTALNHLLTRLSRQDPKLLSKEAARTLPLVVDKLGDQKDKFRSLASHSLVTLFSVAPADVEKYVRNTAMVGKNPRAKETSMHWLLQMHNENGLPFRTYVPVLMELLEDADGMVRDAAKNTVIELFRSAPNAAKSDLKRQLKTFKVRPAIEQAIVKELIPTSSRPETPAAPAEPTPEPAPRKTFSASTSSAAERPITPGIDTKPEVLEPLYVNTNRELDDMIKEMAWFFEGKETEHNWLKRENSVHKLRRLIAGNVTDFSDTFLAGVKSILDGIIKVITSLRTSLCKEGCGLIQEIAYTFGPAMDPLIEQLMQCFVKLSAGTKKISSQLANVTVNTILSQVTYTPRLMQHIWFACQDKNVAPRTYATEWLKTILKKEGHHKHHLEHTGGVDIVEKCLKKGLADANPAVREKTRSTFWVFWGIWPAKADAIMADLDGTAQKLLNKDPSNPNSAKAAESVARPGLGLSKSTMGTSKPSSIREAMMAQRKANAAKNLPARPGSAMAQLSPEKITTTTSSASSKSSGARSRPETGGMSGAPMRPSRKRPEMAARPATAGPYSVRDMDPGSPESVRSKTPKPRETTPKRTVPRTRPGHASHASESSLASPSSVRTGQKSAASPRASPTKLKQSQSTMLSMSSPSRADEDFTMLVPSMANFRTSQRPAPPPQRAASVPPEAPEELSTLVTEIAPQNIPQAAAEPTSQPTLEPELEPQPEPEATPTPVVDPVAEAVDQTMDETVKPEEPVHIIPEPVIEPTPEPSASMQADQAPAASAPTLQVYEDPFTDEQTNSKPTFNLPVLEDKPVNADTASLPSVHAQSPVTQNIEAPDRAKQSLRLLESGIKRIKAKTLDVHGFRKLQSLLRDSKGIFADDKFEALLIGLFQYLEDPLSGTSPEKAQDIKAQILATIRLLLKKERDNFQPHVSRGLESLLETRSAYDIRAHIVSGVEVLADELVTIGDGSEIVVVLTRRLQNVDSSTTEGSRILSTGMHVLRTMLDKRPNFMPTGTELGQLAALAGRCLASADSGVRMDAVQLCVALHSRVGEQTFWDALKDVQDDPKSLITYYIVKRQREQAPTIAA.

2 HEAT repeats span residues 96-134 (TLPL…EKYV) and 168-206 (YVPV…KSDL). Disordered stretches follow at residues 226 to 271 (ELIP…GIDT), 510 to 793 (LLNK…VVDP), and 816 to 839 (PEPV…PAAS). A compositionally biased stretch (low complexity) spans 229–239 (PTSSRPETPAA). Residues 535–545 (SKSTMGTSKPS) are compositionally biased toward polar residues. 3 stretches are compositionally biased toward low complexity: residues 580 to 594 (TTTT…SGAR), 663 to 676 (ASHA…SPSS), and 696 to 708 (QSQS…SSPS).

This sequence belongs to the CLASP family. Interacts with microtubules.

The protein resides in the cytoplasm. The protein localises to the cytoskeleton. Its subcellular location is the nucleus. It localises to the spindle. In terms of biological role, microtubule binding protein that promotes the stabilization of dynamic microtubules. Required for mitotic spindle formation. This chain is Protein STU1 (STU1), found in Gibberella zeae (strain ATCC MYA-4620 / CBS 123657 / FGSC 9075 / NRRL 31084 / PH-1) (Wheat head blight fungus).